A 131-amino-acid chain; its full sequence is Holo-[acyl-carrier-protein] synthase (131 aa).

D8 and E59 together coordinate Mg(2+).

Belongs to the P-Pant transferase superfamily. AcpS family. It depends on Mg(2+) as a cofactor.

It is found in the cytoplasm. The catalysed reaction is apo-[ACP] + CoA = holo-[ACP] + adenosine 3',5'-bisphosphate + H(+). In terms of biological role, transfers the 4'-phosphopantetheine moiety from coenzyme A to a Ser of acyl-carrier-protein. This is Holo-[acyl-carrier-protein] synthase from Rickettsia massiliae (strain Mtu5).